Reading from the N-terminus, the 105-residue chain is Putative membrane protein insertion efficiency factor (105 aa).

A disordered region spans residues 68–105; the sequence is FHPGGLDPVPPRRNESGTEISDARPGSDGEASPGAPGL. Basic and acidic residues predominate over residues 77–94; sequence PPRRNESGTEISDARPGS.

The protein belongs to the UPF0161 family.

Its subcellular location is the cell membrane. Functionally, could be involved in insertion of integral membrane proteins into the membrane. The chain is Putative membrane protein insertion efficiency factor from Thermobifida fusca (strain YX).